We begin with the raw amino-acid sequence, 217 residues long: Somatotropin (217 aa).

The first 27 residues, methionine 1–alanine 27, serve as a signal peptide directing secretion. Histidine 46 contributes to the Zn(2+) binding site. Cysteines 79 and 190 form a disulfide. Serine 132 is subject to Phosphoserine. Residue glutamate 199 participates in Zn(2+) binding. Cysteine 207 and cysteine 215 are disulfide-bonded.

This sequence belongs to the somatotropin/prolactin family.

It localises to the secreted. Functionally, plays an important role in growth control. Its major role in stimulating body growth is to stimulate the liver and other tissues to secrete IGF1. It stimulates both the differentiation and proliferation of myoblasts. It also stimulates amino acid uptake and protein synthesis in muscle and other tissues. This Capra hircus (Goat) protein is Somatotropin (GH1).